The following is a 76-amino-acid chain: U7-lycotoxin-Ls1c (76 aa).

The signal sequence occupies residues 1–22 (MKLIIFTGLALFLLVSLIDVEA). Residues 23–26 (QNEG) constitute a propeptide that is removed on maturation.

Belongs to the neurotoxin 19 (CSTX) family. 07 (U7-Lctx) subfamily. Post-translationally, contains 4 disulfide bonds. In terms of tissue distribution, expressed by the venom gland.

The protein resides in the secreted. The sequence is that of U7-lycotoxin-Ls1c from Lycosa singoriensis (Wolf spider).